The chain runs to 364 residues: DNA replication and repair protein RecF (364 aa).

30–37 (GNNAQGKT) is a binding site for ATP.

Belongs to the RecF family.

It localises to the cytoplasm. The RecF protein is involved in DNA metabolism; it is required for DNA replication and normal SOS inducibility. RecF binds preferentially to single-stranded, linear DNA. It also seems to bind ATP. This chain is DNA replication and repair protein RecF, found in Clostridium botulinum (strain Loch Maree / Type A3).